The sequence spans 311 residues: Probable porphobilinogen deaminase (311 aa).

Cysteine 237 is subject to S-(dipyrrolylmethanemethyl)cysteine. The segment at 270 to 289 is disordered; sequence SKTGDKNNPKSLGQSAGEEL.

The protein belongs to the HMBS family. The cofactor is dipyrromethane.

It catalyses the reaction 4 porphobilinogen + H2O = hydroxymethylbilane + 4 NH4(+). It participates in porphyrin-containing compound metabolism; protoporphyrin-IX biosynthesis; coproporphyrinogen-III from 5-aminolevulinate: step 2/4. In terms of biological role, tetrapolymerization of the monopyrrole PBG into the hydroxymethylbilane pre-uroporphyrinogen in several discrete steps. The chain is Probable porphobilinogen deaminase from Nitrosopumilus maritimus (strain SCM1).